The chain runs to 494 residues: Myocyte-specific enhancer factor 2A (494 aa).

Residues 3 to 57 enclose the MADS-box domain; sequence RKKIQITRIMDERNRQVTFTKRKFGLMKKAYELSVLCDCEIALIIFNSSNKLFQY. The mef2-type DNA-binding region spans 58-86; the sequence is ASTDMDKVLLKYTEYNEPHESRTNSDIVE. Phosphoserine; by CK2 is present on Ser-59. Phosphoserine occurs at positions 98 and 108. Low complexity predominate over residues 171–181; it reads TLTDSSMLSPP. A disordered region spans residues 171-218; it reads TLTDSSMLSPPQTTLHRNVSPGAPQRPPSTGNAGGMLSTTDLIVPNGA. Phosphoserine is present on Ser-233. The disordered stretch occupies residues 238–268; that stretch reads GATGANSLGKVMPTKSPPPPGGGNLGMNSRK. Residue Lys-247 is modified to N6-acetyllysine. At Ser-253 the chain carries Phosphoserine. The required for interaction with MAPKs stretch occupies residues 264-281; sequence MNSRKPDLRVVIPPSSKG. 2 positions are modified to phosphothreonine; by MAPK7 and MAPK14: Thr-302 and Thr-309. Phosphoserine; by MAPK7 is present on Ser-345. The span at 380–392 shows a compositional bias: polar residues; that stretch reads SNLSINTNQNINI. The tract at residues 380 to 494 is disordered; it reads SNLSINTNQN…KRMRMDAWVT (115 aa). Lys-393 bears the N6-acetyllysine; alternate mark. Lys-393 participates in a covalent cross-link: Glycyl lysine isopeptide (Lys-Gly) (interchain with G-Cter in SUMO); alternate. Residue Ser-398 is modified to Phosphoserine; by CDK5. Thr-405 bears the Phosphothreonine mark. Positions 418–432 are enriched in pro residues; that stretch reads QPPPPPPQPQPPQPQ. Ser-440 bears the Phosphoserine mark. Residues 440–453 show a composition bias toward low complexity; that stretch reads SPVDSLSSSSSSYD. Composition is skewed to basic and acidic residues over residues 454–464 and 475–494; these read GSDREDPRGDF and NTEDRESPSVKRMRMDAWVT.

Binds DNA as a homo- or heterodimer. Dimerizes with MEF2D. Interacts with HDAC7. Interacts with PIAS1; the interaction enhances sumoylation. Interacts with HDAC4, HDAC9 and SLC2A4RG. Interacts (via the N-terminal) with MAPK7; the interaction results in the phosphorylation and transcriptional activity of MEF2A. In terms of processing, constitutive phosphorylation on Ser-398 promotes Lys-393 sumoylation thus preventing acetylation at this site. Dephosphorylation on Ser-398 by PPP3CA upon neuron depolarization promotes a switch from sumoylation to acetylation on residue Lys-393 leading to inhibition of dendrite claw differentiation. Phosphorylation on Thr-302 and Thr-309 are the main sites involved in p38 MAPK signaling and activate transcription. Phosphorylated on these sites by MAPK14/p38alpha and MAPK11/p38beta, but not by MAPK13/p38delta nor by MAPK12/p38gamma. Phosphorylation on Ser-398 by CDK5 induced by neurotoxicity inhibits MEF2A transcriptional activation leading to apoptosis of cortical neurons. Phosphorylation on Thr-302, Thr-309 and Ser-345 can be induced by EGF. Sumoylation on Lys-393 is enhanced by PIAS1 and represses transcriptional activity. Phosphorylation on Ser-398 is required for sumoylation. Has no effect on nuclear location nor on DNA binding. Sumoylated with SUMO1 and, to a lesser extent with SUMO2 and SUMO3. PIASx facilitates sumoylation in postsynaptic dendrites in the cerebellar cortex and promotes their morphogenesis. Post-translationally, acetylation on Lys-393 activates transcriptional activity. Acetylated by p300 on several sites in diffentiating myocytes. Acetylation on Lys-4 increases DNA binding and transactivation. Hyperacetylation by p300 leads to enhanced cardiac myocyte growth and heart failure. In terms of processing, proteolytically cleaved in cerebellar granule neurons on several sites by caspase 3 and caspase 7 following neurotoxicity. Preferentially cleaves the CDK5-mediated hyperphosphorylated form which leads to neuron apoptosis and transcriptional inactivation.

It localises to the nucleus. Its function is as follows. Transcriptional activator which binds specifically to the MEF2 element, 5'-YTA[AT](4)TAR-3', found in numerous muscle-specific genes. Also involved in the activation of numerous growth factor- and stress-induced genes. Mediates cellular functions not only in skeletal and cardiac muscle development, but also in neuronal differentiation and survival. Plays diverse roles in the control of cell growth, survival and apoptosis via p38 MAPK signaling in muscle-specific and/or growth factor-related transcription. In cerebellar granule neurons, phosphorylated and sumoylated MEF2A represses transcription of NUR77 promoting synaptic differentiation. Associates with chromatin to the ZNF16 promoter. The polypeptide is Myocyte-specific enhancer factor 2A (MEF2A) (Pongo abelii (Sumatran orangutan)).